A 419-amino-acid chain; its full sequence is Akuammiline synthase 1 (419 aa).

The active-site Proton acceptor is the histidine 151. The short motif at 206-213 is the Nuclear localization signal element; the sequence is TRRFVFPA. The active-site Proton acceptor is aspartate 359.

It belongs to the plant acyltransferase family. As to quaternary structure, monomer.

The protein resides in the cytoplasm. The protein localises to the nucleus. It carries out the reaction rhazimol + acetyl-CoA = akuammiline + CoA + H(+). It participates in alkaloid biosynthesis. Its function is as follows. Acyltransferase involved in the biosynthesis of akuammilan monoterpene indole alkaloids (MIAs) natural products, components with various biological properties such as antidiabetic, antibacterial, anti-inflammatory, anticancer, and antimalarial activities. Catalyzes the conversion of rhazimol to akuammiline. This is Akuammiline synthase 1 from Alstonia scholaris (Dogbane).